The sequence spans 200 residues: Rho GDP-dissociation inhibitor 2 (200 aa).

The disordered stretch occupies residues 1 to 39; it reads MTEKDAQPQLEEADDDLDSKLNYKPPPQKSLKELQEMDK. Thr2 carries the N-acetylthreonine modification. Residue Lys20 is modified to N6-acetyllysine. The residue at position 23 (Tyr23) is a Phosphotyrosine. Residues Lys24, Lys39, Lys46, Lys101, and Lys123 each carry the N6-acetyllysine modification. Basic and acidic residues predominate over residues 30–39; that stretch reads SLKELQEMDK. At Ser144 the chain carries Phosphoserine. Lys174 is subject to N6-acetyllysine.

This sequence belongs to the Rho GDI family. Interacts with RHOA. Interacts with RAC1. Interacts with RAC2. Interacts with CDC42. Preferentially expressed in hematopoietic cells.

It localises to the cytoplasm. The protein localises to the cytosol. Its function is as follows. Regulates the GDP/GTP exchange reaction of the Rho proteins by inhibiting the dissociation of GDP from them, and the subsequent binding of GTP to them. Regulates reorganization of the actin cytoskeleton mediated by Rho family members. This is Rho GDP-dissociation inhibitor 2 (Arhgdib) from Mus musculus (Mouse).